Here is a 688-residue protein sequence, read N- to C-terminus: Zinc finger protein 770 (688 aa).

Lys11 participates in a covalent cross-link: Glycyl lysine isopeptide (Lys-Gly) (interchain with G-Cter in SUMO2). 3 consecutive C2H2-type zinc fingers follow at residues 27–49, 55–77, and 81–103; these read YVCNICFKHFETPSKLARHYLIH, FECDVCHKTFRQLVHLERHQLTH, and FKCSICQRHFKNLKTFVKHQQLH. Residues Lys112, Lys121, and Lys146 each participate in a glycyl lysine isopeptide (Lys-Gly) (interchain with G-Cter in SUMO2) cross-link. C2H2-type zinc fingers lie at residues 160–182, 188–210, and 216–238; these read HACTICGKMFPSQSKLDRHVLIH, FKCVLCTKSFRQSTHLKIHQLTH, and FQCCFCQKGFKIQSKLLKHKQIH. Lys262 is covalently cross-linked (Glycyl lysine isopeptide (Lys-Gly) (interchain with G-Cter in SUMO2)). Residues 294–318 form a C2H2-type 7; degenerate zinc finger; it reads FQCPKCEKCFESEQILNEHSCFPAR. Residues Lys420 and Lys437 each participate in a glycyl lysine isopeptide (Lys-Gly) (interchain with G-Cter in SUMO2) cross-link. 4 C2H2-type zinc fingers span residues 475 to 497, 503 to 525, 623 to 645, and 651 to 673; these read CPCDKCEKVFPSISKLKRHYLIH, FGCNICGKSFRQSAHLKRHEQTH, YRCSVCAKSFRSPSKLERHYLIH, and FECSVCGKTFRQAPHWKRHQLTH. Lys681 participates in a covalent cross-link: Glycyl lysine isopeptide (Lys-Gly) (interchain with G-Cter in SUMO2).

Belongs to the krueppel C2H2-type zinc-finger protein family.

The protein resides in the nucleus. Functionally, may be involved in transcriptional regulation. The protein is Zinc finger protein 770 (ZNF770) of Pongo abelii (Sumatran orangutan).